A 319-amino-acid polypeptide reads, in one-letter code: MQNRNTYEWTKKMTRLISVLVMIHIITRTSISNAYPIFAQQGYENPREATGRIVCANCHLAKKPVDIEVPQSVLPNTVFEAIVKIPYDTQMKQVLANGKKGALNVGAVLILPEGFELAPPDRISPEIRQKTGNLYFQNYRPNQKNIIVIGPVPGQKYSELVFPILSPDPATDKEAHFLKYPIYVGGNRGRGQIYPDGSKSNNTVYSASATGRVSKILRKEKGGYEITIDNKSDGGQVVDIVPPGPELLISEGELIKVDQPLTNNPNMGGFGQGDAEIVLQDPLRVKGLLLFLASVILAQIFLVLKKKQFEKVQLAEMNL.

The N-terminal stretch at 1–34 (MQNRNTYEWTKKMTRLISVLVMIHIITRTSISNA) is a signal peptide. Residues Tyr-35, Cys-55, Cys-58, and His-59 each contribute to the heme site. The helical transmembrane segment at 285–305 (VKGLLLFLASVILAQIFLVLK) threads the bilayer.

This sequence belongs to the cytochrome f family. In terms of assembly, the 4 large subunits of the cytochrome b6-f complex are cytochrome b6, subunit IV (17 kDa polypeptide, petD), cytochrome f and the Rieske protein, while the 4 small subunits are PetG, PetL, PetM and PetN. The complex functions as a dimer. It depends on heme as a cofactor.

The protein resides in the plastid. It localises to the chloroplast thylakoid membrane. In terms of biological role, component of the cytochrome b6-f complex, which mediates electron transfer between photosystem II (PSII) and photosystem I (PSI), cyclic electron flow around PSI, and state transitions. This chain is Cytochrome f, found in Pinus koraiensis (Korean pine).